A 266-amino-acid chain; its full sequence is Tryptophan synthase alpha chain (266 aa).

Residues glutamate 49 and aspartate 60 each act as proton acceptor in the active site.

It belongs to the TrpA family. In terms of assembly, tetramer of two alpha and two beta chains.

It carries out the reaction (1S,2R)-1-C-(indol-3-yl)glycerol 3-phosphate + L-serine = D-glyceraldehyde 3-phosphate + L-tryptophan + H2O. It participates in amino-acid biosynthesis; L-tryptophan biosynthesis; L-tryptophan from chorismate: step 5/5. In terms of biological role, the alpha subunit is responsible for the aldol cleavage of indoleglycerol phosphate to indole and glyceraldehyde 3-phosphate. In Opitutus terrae (strain DSM 11246 / JCM 15787 / PB90-1), this protein is Tryptophan synthase alpha chain.